A 601-amino-acid polypeptide reads, in one-letter code: MEATRTSFGLHNAPLCPTTNPSLFPRRWLHKHTLSLKPAKQHHLVCVRATESNDNLESSRPLAHFSPTLWGDHFLSVPLHVAEFDDFSREIEVTMKPKVRDMLKSSKNSDNERIRLIHLLMNLGIAYHFEIEIDEILGQAFGNLDDIIAKENDLETISTMFEVFRLRGYYMPCYAFNRFKGEDGRFKESLAEDIRGMLQLYEAAHLGTPSEDIMDEALSFTRYRLESLTSNHTATASPHLSKHIQNALYRARYHNLEILVAREYISFYEQEEDHDETLLKFAKLNFNYCQLHYIQELKDLTKWWKELDLASKLPYIRDRIVEVYFGALALYFEPRYSLGRIIVTKITMIVTVFNDTCDAYGTLPEVTSLVDSFQRWDLGDIEKLPSYVKIVFRGVFETLEEIEQEMRPQGRSRIVQVAVDEIKKLGKAYLAISKWARASHVPTFEEYMEFGMQTSMDHFAAYSFIAMEDCDENQTCEWYKSRPKMMEALNGVFRIKNDINTFEQEMSRGEVAKGLNCYMKQHGVSKEEAIGEMNKIYSNYYKIIMEEYLTTTAVPRPILVRCLNVSRPIHHFYKERDEFTDPYFGMLKEVITSLFIHPIPL.

Mg(2+) is bound by residues asparagine 354, aspartate 358, asparagine 497, threonine 501, and glutamate 505. Residues 354–358 carry the DDXXD motif; degenerate motif; it reads NDTCD.

Belongs to the terpene synthase family. Tpsa subfamily. Mg(2+) is required as a cofactor. It depends on Mn(2+) as a cofactor. In terms of tissue distribution, expressed exclusively in flowers.

It localises to the cytoplasm. It functions in the pathway secondary metabolite biosynthesis; terpenoid biosynthesis. The chain is Terpenoid synthase 17 (TPS17) from Arabidopsis thaliana (Mouse-ear cress).